A 141-amino-acid chain; its full sequence is Nucleoside diphosphate kinase (141 aa).

ATP contacts are provided by K11, F59, R87, T93, R104, and N114. H117 functions as the Pros-phosphohistidine intermediate in the catalytic mechanism.

It belongs to the NDK family. Homotetramer. The cofactor is Mg(2+).

The protein localises to the cytoplasm. It carries out the reaction a 2'-deoxyribonucleoside 5'-diphosphate + ATP = a 2'-deoxyribonucleoside 5'-triphosphate + ADP. The catalysed reaction is a ribonucleoside 5'-diphosphate + ATP = a ribonucleoside 5'-triphosphate + ADP. Major role in the synthesis of nucleoside triphosphates other than ATP. The ATP gamma phosphate is transferred to the NDP beta phosphate via a ping-pong mechanism, using a phosphorylated active-site intermediate. The protein is Nucleoside diphosphate kinase of Pseudomonas putida (strain ATCC 47054 / DSM 6125 / CFBP 8728 / NCIMB 11950 / KT2440).